Consider the following 71-residue polypeptide: DNA-directed RNA polymerase subunit epsilon (71 aa).

This sequence belongs to the RNA polymerase subunit epsilon family. In terms of assembly, RNAP is composed of a core of 2 alpha, a beta and a beta' subunit. The core is associated with a delta subunit, and at least one of epsilon or omega. When a sigma factor is associated with the core the holoenzyme is formed, which can initiate transcription.

The enzyme catalyses RNA(n) + a ribonucleoside 5'-triphosphate = RNA(n+1) + diphosphate. Functionally, a non-essential component of RNA polymerase (RNAP). The protein is DNA-directed RNA polymerase subunit epsilon of Geobacillus kaustophilus (strain HTA426).